A 142-amino-acid chain; its full sequence is Large ribosomal subunit protein uL11 (142 aa).

Belongs to the universal ribosomal protein uL11 family. In terms of assembly, part of the ribosomal stalk of the 50S ribosomal subunit. Interacts with L10 and the large rRNA to form the base of the stalk. L10 forms an elongated spine to which L12 dimers bind in a sequential fashion forming a multimeric L10(L12)X complex. In terms of processing, one or more lysine residues are methylated.

Forms part of the ribosomal stalk which helps the ribosome interact with GTP-bound translation factors. The protein is Large ribosomal subunit protein uL11 of Buchnera aphidicola subsp. Acyrthosiphon pisum (strain APS) (Acyrthosiphon pisum symbiotic bacterium).